A 724-amino-acid chain; its full sequence is Long-chain-fatty-acid--CoA ligase ACSBG1 (724 aa).

A disordered region spans residues 1–30 (MPRNSGAGYGCPHGDPSMLDSRETPQESRQ). A compositionally biased stretch (basic and acidic residues) spans 20–30 (DSRETPQESRQ). A phosphoserine mark is found at S53 and S56. ATP is bound by residues 282–290 (TSGTTGNPK), 472–477 (AGYGLS), D550, and R565. At Y658 the chain carries Phosphotyrosine. Residue K701 coordinates ATP.

It belongs to the ATP-dependent AMP-binding enzyme family. Bubblegum subfamily. Expressed primarily in brain. Expressed at lower level in testis and adrenal gland. Present in all regions of brain except pituitary.

It is found in the cytoplasm. It localises to the cytoplasmic vesicle. The protein localises to the microsome. Its subcellular location is the endoplasmic reticulum. The protein resides in the cell membrane. It carries out the reaction a long-chain fatty acid + ATP + CoA = a long-chain fatty acyl-CoA + AMP + diphosphate. The enzyme catalyses (E)-hexadec-2-enoate + ATP + CoA = (2E)-hexadecenoyl-CoA + AMP + diphosphate. It catalyses the reaction hexadecanoate + ATP + CoA = hexadecanoyl-CoA + AMP + diphosphate. Its function is as follows. Catalyzes the conversion of fatty acids such as long-chain and very long-chain fatty acids to their active form acyl-CoAs for both synthesis of cellular lipids, and degradation via beta-oxidation. Can activate diverse saturated, monosaturated and polyunsaturated fatty acids. The polypeptide is Long-chain-fatty-acid--CoA ligase ACSBG1 (Homo sapiens (Human)).